A 94-amino-acid polypeptide reads, in one-letter code: MRVFALTLSLLLVWLLYTLMWGKNGVMDFRAVQAEIEVQQQVNANLHLRNQEMFAEIDDLRQGLDAIEERARNELGMVKDGETFYRIIGEESRQ.

Residues Met1–Val3 lie on the Cytoplasmic side of the membrane. A helical transmembrane segment spans residues Phe4–Trp21. Residues Gly22 to Gln94 lie on the Periplasmic side of the membrane. The stretch at Gln33–Gly76 forms a coiled coil.

This sequence belongs to the FtsB family. In terms of assembly, part of a complex composed of FtsB, FtsL and FtsQ.

The protein resides in the cell inner membrane. Its function is as follows. Essential cell division protein. May link together the upstream cell division proteins, which are predominantly cytoplasmic, with the downstream cell division proteins, which are predominantly periplasmic. This Vibrio cholerae serotype O1 (strain ATCC 39315 / El Tor Inaba N16961) protein is Cell division protein FtsB.